Here is a 238-residue protein sequence, read N- to C-terminus: Lipoarabinomannan carrier protein LprG (238 aa).

A signal peptide spans 1–26; that stretch reads MQAPKHHRRLFAVLATLNTATAVIAG. The N-palmitoyl cysteine moiety is linked to residue cysteine 27. The S-diacylglycerol cysteine moiety is linked to residue cysteine 27.

The protein belongs to the LppX/LprAFG lipoprotein family. Post-translationally, modified by Lgt on Cys-27 with an S-linked diacylglyceral, signal peptide is removed by LspA, Cys-27 is further modifed with a fatty acid on its amino group by Lnt yielding a triacylated protein. Probably glycosylated, which is required for T-cell activation.

The protein resides in the cell inner membrane. Its subcellular location is the secreted. It localises to the cell wall. Helps membrane protein ML0556 (P55) transport triacylglycerides (TAG) across the inner cell membrane into the periplasm and probably ultimately to the outer membrane. Binds TAG in its hydrophobic cavity and transfers it between lipid bilayers. TAG probably regulates lipid metabolism and growth regulation and plays a structural role in the outer membrane. Binds di- and triacylated phosphatidyl-myo-inositol mannosides (PIMs), and glycolipid lipoglycan modulins lipoarabinomannan (LAM) and lipomannan (LM), facilitating their recognition by TLR2. Required for activity of drug efflux transporter ML0556. Required, probably with ML0556, for normal surface localization of LAM. Functionally, constitutes a host TLR2 agonist (toll-like receptor) able to stimulate proliferation of CD4+ T-cells derived from a human leprosy patient following protein processing/presentation by MHC class II molecules in peripheral blood mononuclear cells. The sequence is that of Lipoarabinomannan carrier protein LprG from Mycobacterium leprae (strain TN).